Consider the following 296-residue polypeptide: Nucleotide-binding protein spr1424 (296 aa).

13–20 (GMGGAGKT) contacts ATP. 63–66 (DMRS) is a binding site for GTP.

The protein belongs to the RapZ-like family.

Functionally, displays ATPase and GTPase activities. The polypeptide is Nucleotide-binding protein spr1424 (Streptococcus pneumoniae (strain ATCC BAA-255 / R6)).